The following is a 189-amino-acid chain: TARYTALVAKDAKRAAADMGKVLHVEIDPEDAKVERMAKDESNQFGLFSWEFVRRHGLHLFGTCSTWFLLDIAFYSQNLFQKDVFTAIGWIPPAKTMNAVQEVYKIARAQTLIALCSTVPGYWFTVAFIDIIGRFAIQLMGFFFMTVFMFAIAIPYHHWTLQENRIGFVIMYSLTFFFANFGPNATTFV.

Residues 1–55 (TARYTALVAKDAKRAAADMGKVLHVEIDPEDAKVERMAKDESNQFGLFSWEFVRR) are Cytoplasmic-facing. Residues 56-76 (HGLHLFGTCSTWFLLDIAFYS) traverse the membrane as a helical segment. Residues 77 to 111 (QNLFQKDVFTAIGWIPPAKTMNAVQEVYKIARAQT) are Extracellular-facing. Residues 112 to 132 (LIALCSTVPGYWFTVAFIDII) form a helical membrane-spanning segment. The Cytoplasmic segment spans residues 133-134 (GR). The chain crosses the membrane as a helical span at residues 135–155 (FAIQLMGFFFMTVFMFAIAIP). The Extracellular portion of the chain corresponds to 156–165 (YHHWTLQENR). A helical transmembrane segment spans residues 166-186 (IGFVIMYSLTFFFANFGPNAT). The Cytoplasmic portion of the chain corresponds to 187 to 189 (TFV).

The protein belongs to the major facilitator superfamily. Phosphate:H(+) symporter (TC 2.A.1.9) family.

It localises to the cell membrane. The enzyme catalyses phosphate(in) + H(+)(in) = phosphate(out) + H(+)(out). Low-affinity transporter for external inorganic phosphate (Pi). In Petunia hybrida (Petunia), this protein is Low affinity inorganic phosphate transporter 2.